A 372-amino-acid polypeptide reads, in one-letter code: Adaptive-response sensory kinase SasA (372 aa).

The region spanning 147-360 (MVAHELRTPL…CFHFTVPVWQ (214 aa)) is the Histidine kinase domain. Histidine 150 is modified (phosphohistidine; by autocatalysis).

Homooligomerizes. Interacts with KaiC. Participates in the KaiBC complex, whose core is composed of a KaiC homohexamer and 6 KaiB.

The enzyme catalyses ATP + protein L-histidine = ADP + protein N-phospho-L-histidine.. Member of the two-component regulatory system SasA/RpaA involved in genome-wide circadian gene expression. One of several clock output pathways. Participates in the Kai clock protein complex, the main circadian regulator in cyanobacteria, via its interaction with KaiC. KaiC enhances the autophosphorylation activity of SasA, which then transfers its phosphate group to RpaA to activate it. In addition to its output function, recruits fold-shifted KaiB (KaiB(fs)) to KaiC to cooperatively form the KaiB(6):KaiC(6) complex (independent of SasA kinase activity). Required for robustness of the circadian rhythm of gene expression and is involved in clock output, also required for adaptation to light/dark cycles. The polypeptide is Adaptive-response sensory kinase SasA (Prochlorococcus marinus (strain MIT 9215)).